A 390-amino-acid chain; its full sequence is Zinc transporter 7 (390 aa).

The Cytoplasmic segment spans residues 1-37 (MLPLSIKDDEYKPPKFNLVRKVSGWIRSIFSDTTSRN). Residues 38–58 (LFCFLCLNLSFAFVELFYGIW) form a helical membrane-spanning segment. Topologically, residues 59-67 (SNSLGLISD) are lumenal. Residues 68–88 (SFHMFFDCTALLAGLAASVIS) traverse the membrane as a helical segment. Over 89–102 (RWKTNEAFSYGYVR) the chain is Cytoplasmic. A helical transmembrane segment spans residues 103-123 (AEVLAGFVNGLFLIFTAFFIF). The Lumenal segment spans residues 124–140 (SEGIERALDTPEVHHER). A helical membrane pass occupies residues 141-161 (LLPVSILGFLVNLIGIFVFQH). Residues 161–226 (HGGGHGHSHE…SHDQSHKHGH (66 aa)) form a his-rich loop region. Residues 162–250 (GGGHGHSHES…TGSSKQILEG (89 aa)) lie on the Cytoplasmic side of the membrane. The disordered stretch occupies residues 167–243 (HSHESGHGHS…DEPPEEHTGS (77 aa)). Residues 177-186 (HSLFNGSLSH) show a composition bias toward low complexity. Over residues 187–208 (GHSHSHGGSHGHSHGGGHGHSH) the composition is skewed to basic residues. 2 stretches are compositionally biased toward basic and acidic residues: residues 209-222 (SHGE…DQSH) and 232-242 (CHDEPPEEHTG). Residues 251–271 (VFLHIVADALGSVGVIISTIL) traverse the membrane as a helical segment. Over 272-276 (MQRYG) the chain is Lumenal. A helical transmembrane segment spans residues 277 to 297 (LMIADPICSMLIALLIFVSVI). Over 298 to 390 (PLLKQSIGIL…LYVQIDMAAM (93 aa)) the chain is Cytoplasmic.

Belongs to the cation diffusion facilitator (CDF) transporter (TC 2.A.4) family. SLC30A subfamily. In terms of assembly, homooligomer.

It localises to the golgi apparatus membrane. The protein localises to the cytoplasmic vesicle. The protein resides in the golgi apparatus. Its subcellular location is the trans-Golgi network. It is found in the sarcoplasmic reticulum. It localises to the mitochondrion. It catalyses the reaction Zn(2+)(in) = Zn(2+)(out). Functionally, zinc ion transporter mediating zinc entry from the cytosol into the lumen of organelles along the secretory pathway. By contributing to zinc ion homeostasis within the early secretory pathway, regulates the activation and folding of enzymes like alkaline phosphatases. This chain is Zinc transporter 7 (slc30a7), found in Xenopus tropicalis (Western clawed frog).